Reading from the N-terminus, the 232-residue chain is Lipoprotein-releasing system ATP-binding protein LolD (232 aa).

In terms of domain architecture, ABC transporter spans 6–231 (ISCENLNKVY…KLTIKESQHV (226 aa)). Residue 42 to 49 (GSSGSGKS) participates in ATP binding.

Belongs to the ABC transporter superfamily. Lipoprotein translocase (TC 3.A.1.125) family. In terms of assembly, the complex is composed of two ATP-binding proteins (LolD) and two transmembrane proteins (LolC and LolE).

It is found in the cell inner membrane. In terms of biological role, part of the ABC transporter complex LolCDE involved in the translocation of mature outer membrane-directed lipoproteins, from the inner membrane to the periplasmic chaperone, LolA. Responsible for the formation of the LolA-lipoprotein complex in an ATP-dependent manner. The sequence is that of Lipoprotein-releasing system ATP-binding protein LolD from Pseudoalteromonas translucida (strain TAC 125).